A 306-amino-acid chain; its full sequence is Beta-lactamase (306 aa).

The segment at residues 1 to 34 is a signal peptide (tat-type signal); the sequence is MDRTTARPNRRAVLATGVGAALAATAAAAGPAHA. Ser82 functions as the Acyl-ester intermediate in the catalytic mechanism. Residue 250 to 252 participates in substrate binding; it reads KTG.

The protein belongs to the class-A beta-lactamase family. In terms of processing, predicted to be exported by the Tat system. The position of the signal peptide cleavage has not been experimentally proven.

The enzyme catalyses a beta-lactam + H2O = a substituted beta-amino acid. This is Beta-lactamase (blaF) from Streptomyces fradiae (Streptomyces roseoflavus).